The following is a 205-amino-acid chain: GTP cyclohydrolase-2 (205 aa).

49 to 53 contacts GTP; sequence RLHSE. The Zn(2+) site is built by C54, C65, and C67. GTP-binding positions include Q70, 92–94, and T114; that span reads EGR. Residue D126 is the Proton acceptor of the active site. Catalysis depends on R128, which acts as the Nucleophile. Residues T149 and K154 each contribute to the GTP site.

Belongs to the GTP cyclohydrolase II family. Zn(2+) is required as a cofactor.

It carries out the reaction GTP + 4 H2O = 2,5-diamino-6-hydroxy-4-(5-phosphoribosylamino)-pyrimidine + formate + 2 phosphate + 3 H(+). It functions in the pathway cofactor biosynthesis; riboflavin biosynthesis; 5-amino-6-(D-ribitylamino)uracil from GTP: step 1/4. Catalyzes the conversion of GTP to 2,5-diamino-6-ribosylamino-4(3H)-pyrimidinone 5'-phosphate (DARP), formate and pyrophosphate. In Pseudomonas aeruginosa (strain LESB58), this protein is GTP cyclohydrolase-2.